The chain runs to 429 residues: Putative pentatricopeptide repeat-containing protein At1g03510 (429 aa).

10 PPR repeats span residues 11 to 45 (KLIS…FALP), 47 to 81 (DAHV…NFLS), 82 to 112 (NPFV…IPQR), 113 to 147 (NAVV…PNES), 148 to 180 (SFNA…RFKP), 181 to 215 (NLIT…LIEP), 216 to 246 (HPQL…MEDR), 247 to 281 (DVVA…KVTP), 282 to 312 (DDIA…MQGD), and 318 to 348 (SKDH…MPEK). The type E motif stretch occupies residues 353–428 (TWGALLGACR…SPGSSWCLFK (76 aa)).

The protein belongs to the PPR family. PCMP-E subfamily.

This is Putative pentatricopeptide repeat-containing protein At1g03510 (PCMP-E3) from Arabidopsis thaliana (Mouse-ear cress).